Reading from the N-terminus, the 121-residue chain is Griffithsin (121 aa).

The 120-residue stretch at 1–120 folds into the Jacalin-type lectin domain; sequence SLTHRKFGGS…LDSLDIYYEQ (120 aa).

In terms of biological role, mixed specificity lectin with anti-HIV activity. Binds to HIV envelope glycoproteins, including exterior membrane glycoprotein gp120, and inhibits viral entry into cells. Binding to gp120 is dependent on gp120 being glycosylated, and is inhibited by mannose, glucose and N-acetylglucosamine. The chain is Griffithsin from Griffithsia sp. (strain Q66D336) (Red alga).